Reading from the N-terminus, the 695-residue chain is FMR1-interacting protein NUFIP2 (695 aa).

The segment at 1-100 (MEEKPGQPQP…KTGYGELNGN (100 aa)) is disordered. 2 stretches are compositionally biased toward basic residues: residues 11–23 (QHHHSHHHPHHHP) and 30–53 (PHHHHHYYFYNHSHNHHHHHHHQQ). A Glycyl lysine isopeptide (Lys-Gly) (interchain with G-Cter in SUMO2) cross-link involves residue K78. At T87 the chain carries Phosphothreonine. K109 participates in a covalent cross-link: Glycyl lysine isopeptide (Lys-Gly) (interchain with G-Cter in SUMO2). S112 and S113 each carry phosphoserine. Glycyl lysine isopeptide (Lys-Gly) (interchain with G-Cter in SUMO2) cross-links involve residues K136, K146, K157, and K171. Disordered stretches follow at residues 155–189 (IQKNSMDKKNGKSYENKSGENQSVDKSDTIPIPNG), 204–234 (GKGADNDGSGSESGYTTPKKRKARRNSAKGC), 261–341 (FKPD…KPPP), and 369–402 (TIQNSSVSPTSSSSSSSSTGETQTQSSSRLSQVP). Residues 159–182 (SMDKKNGKSYENKSGENQSVDKSD) are compositionally biased toward basic and acidic residues. Phosphoserine occurs at positions 212 and 214. Y218 is modified (phosphotyrosine). Phosphothreonine is present on residues T219 and T220. Over residues 221–230 (PKKRKARRNS) the composition is skewed to basic residues. Residues 261-275 (FKPDYSEQKGNRVDG) show a composition bias toward basic and acidic residues. Glycyl lysine isopeptide (Lys-Gly) (interchain with G-Cter in SUMO2) cross-links involve residues K262 and K281. R291 carries the post-translational modification Omega-N-methylarginine. K293 is covalently cross-linked (Glycyl lysine isopeptide (Lys-Gly) (interchain with G-Cter in SUMO2)). S304 carries the post-translational modification Phosphoserine. K307 participates in a covalent cross-link: Glycyl lysine isopeptide (Lys-Gly) (interchain with G-Cter in SUMO2). The span at 373–396 (SSVSPTSSSSSSSSTGETQTQSSS) shows a compositional bias: low complexity. Position 376 is a phosphoserine (S376). T571 bears the Phosphothreonine mark. A phosphoserine mark is found at S572, S592, S608, and S629. Residue T633 is modified to Phosphothreonine. 4 positions are modified to phosphoserine: S637, S652, S655, and S692.

As to quaternary structure, interacts with FMR1 (via N-terminus). Interacts with DDX6.

It is found in the nucleus. The protein localises to the cytoplasm. It localises to the stress granule. Functionally, binds RNA. In Homo sapiens (Human), this protein is FMR1-interacting protein NUFIP2.